Here is an 872-residue protein sequence, read N- to C-terminus: MSRRNQKKPQAPIGNETNLDFVLQNLEVYKSQIEHYKTQQQQIKEEDLKLLKFKNQDQDGNSGNDDDDEENNSNKQQELLRRVNQIKQQVQLIKKVGSKVEKDLNLNEDENKKNGLSEQQVKEEQLRTITEEQVKYQNLVFNMDYQLDLNESGGHRRHRRETDYDTEKWFEISHDQKNYVSIYANQKTSYCWWLKDYFNKNNYDHLNVSINRLETEAEFYAFDDFSQTIKLTNNSYQTVNIDVNFDNNLCILALLRFLLSLERFNILNIRSSYTRNQYNFEKIGELLETIFAVVFSHRHLQGIHLQVPCEAFQYLVNSSSQISVKDSQLQVYSFSTDLKLVDTNKVQDYFKFLQEFPRLTHVSQQAIPVSATNAVENLNVLLKKVKHANLNLVSIPTQFNFDFYFVNLQHLKLEFGLEPNILTKQKLENLLLSIKQSKNLKFLRLNFYTYVAQETSRKQILKQATTIKNLKNNKNQEETPETKDETPSESTSGMKFFDHLSELTELEDFSVNLQATQEIYDSLHKLLIRSTNLKKFKLSYKYEMEKSKMDTFIDLKNIYETLNNLKRCSVNISNPHGNISYELTNKDSTFYKFKLTLNQELQHAKYTFKQNEFQFNNVKSAKIESSSLESLEDIDSLCKSIASCKNLQNVNIIASLLYPNNIQKNPFNKPNLLFFKQFEQLKNLENVSINCILDQHILNSISEFLEKNKKIKAFILKRYYLLQYYLDYTKLFKTLQQLPELNQVYINQQLEELTVSEVHKQVWENHKQKAFYEPLCEFIKESSQTLQLIDFDQNTVSDDSIKKILESISESKYHHYLRLNPSQSSSLIKSENEEIQELLKACDEKGVLVKAYYKFPLCLPTGTYYDYNSDRW.

Disordered stretches follow at residues 55–75 (NQDQ…NSNK) and 471–492 (KNNK…ESTS). The span at 474–486 (KNQEETPETKDET) shows a compositional bias: basic and acidic residues.

As to quaternary structure, telomerase consist of two subunit, p80 and p95 that form a 1:1:1 complex with the 159 nt telomerase RNA.

Its subcellular location is the nucleus. The protein resides in the chromosome. The protein localises to the telomere. It carries out the reaction DNA(n) + a 2'-deoxyribonucleoside 5'-triphosphate = DNA(n+1) + diphosphate. Functionally, ribonucleoprotein DNA polymerase that catalyzes the de novo synthesis of telomeric simple sequence repeats. Subunit p95 contains some or all of the template-independent primer DNA-binding site termed the anchor site. In Tetrahymena thermophila, this protein is Telomerase component p95.